Here is a 620-residue protein sequence, read N- to C-terminus: 1-deoxy-D-xylulose-5-phosphate synthase (620 aa).

Residues H80 and 121-123 (GHS) contribute to the thiamine diphosphate site. A Mg(2+)-binding site is contributed by D152. Thiamine diphosphate-binding positions include 153–154 (GA), N181, Y288, and E370. Residue N181 coordinates Mg(2+).

Belongs to the transketolase family. DXPS subfamily. Homodimer. Requires Mg(2+) as cofactor. Thiamine diphosphate serves as cofactor.

It catalyses the reaction D-glyceraldehyde 3-phosphate + pyruvate + H(+) = 1-deoxy-D-xylulose 5-phosphate + CO2. It functions in the pathway metabolic intermediate biosynthesis; 1-deoxy-D-xylulose 5-phosphate biosynthesis; 1-deoxy-D-xylulose 5-phosphate from D-glyceraldehyde 3-phosphate and pyruvate: step 1/1. Catalyzes the acyloin condensation reaction between C atoms 2 and 3 of pyruvate and glyceraldehyde 3-phosphate to yield 1-deoxy-D-xylulose-5-phosphate (DXP). The protein is 1-deoxy-D-xylulose-5-phosphate synthase of Salmonella choleraesuis (strain SC-B67).